We begin with the raw amino-acid sequence, 267 residues long: Cerberus (267 aa).

A signal peptide spans 1 to 17 (MHLLLFQLLVLLPLGKT). Disordered stretches follow at residues 19-52 (RHQD…EAEE) and 87-113 (WKKP…QSLI). The N-linked (GlcNAc...) asparagine glycan is linked to Asn26. A compositionally biased stretch (basic and acidic residues) spans 88-101 (KKPEREMHPSRDSD). 4 cysteine pairs are disulfide-bonded: Cys162/Cys209, Cys176/Cys223, Cys186/Cys239, and Cys190/Cys241. Residues 162-246 (CRTVPFSQTI…EECQCKVKTE (85 aa)) enclose the CTCK domain. N-linked (GlcNAc...) asparagine glycosylation is present at Asn222.

Belongs to the DAN family. As to quaternary structure, forms monomers and predominantly dimers. Post-translationally, N-glycosylated.

The protein resides in the secreted. Cytokine that may play a role in anterior neural induction and somite formation during embryogenesis in part through a BMP-inhibitory mechanism. Can regulate Nodal signaling during gastrulation as well as the formation and patterning of the primitive streak. In Homo sapiens (Human), this protein is Cerberus (CER1).